Here is a 341-residue protein sequence, read N- to C-terminus: Barley B recombinant-like protein A (341 aa).

Basic residues predominate over residues H48 to H62. 2 disordered regions span residues H48–A95 and M150–I234. A compositionally biased stretch (low complexity) spans G68–A77. Residues M78 to M90 are compositionally biased toward pro residues. Residues P190–A211 show a composition bias toward basic residues.

The protein belongs to the BBR/BPC family.

It is found in the nucleus. Transcriptional regulator that specifically binds to GA-rich elements (GAGA-repeats) present in regulatory sequences of genes involved in developmental processes. The protein is Barley B recombinant-like protein A of Oryza sativa subsp. japonica (Rice).